Reading from the N-terminus, the 200-residue chain is Transcriptional repressor NrdR (200 aa).

Residues Cys-3–Cys-34 fold into a zinc finger. One can recognise an ATP-cone domain in the interval Ile-49–Asp-139. Residues Leu-158–Lys-200 form a disordered region. Over residues Leu-186–Lys-200 the composition is skewed to polar residues.

The protein belongs to the NrdR family. The cofactor is Zn(2+).

Its function is as follows. Negatively regulates transcription of bacterial ribonucleotide reductase nrd genes and operons by binding to NrdR-boxes. The sequence is that of Transcriptional repressor NrdR from Synechococcus sp. (strain JA-3-3Ab) (Cyanobacteria bacterium Yellowstone A-Prime).